Reading from the N-terminus, the 198-residue chain is MDNNYLNYYNVFEEFDAGAGIKEKELFTEEQQLSFLPKKGLGNGGFDGVERLYSNIINNNDIKSLLALIMLVFAINTNSLVALIFIILSAIFVPVPALIIAYCIALHLKNGSDATHVGISILLMLASAVTIYLTSTSKISKGFKRAIDVVLLVILGFYIVKIYGIDRQISIPSRRYCRQMSGPSSLENLNAFQTHSNY.

At 1 to 55 the chain is on the virion surface side; that stretch reads MDNNYLNYYNVFEEFDAGAGIKEKELFTEEQQLSFLPKKGLGNGGFDGVERLYSN. Residues 56–76 traverse the membrane as a helical segment; the sequence is IINNNDIKSLLALIMLVFAIN. The Intravirion portion of the chain corresponds to 77-145; it reads TNSLVALIFI…TSKISKGFKR (69 aa). Residues 146–166 form a helical membrane-spanning segment; that stretch reads AIDVVLLVILGFYIVKIYGID. The Virion surface segment spans residues 167–198; the sequence is RQISIPSRRYCRQMSGPSSLENLNAFQTHSNY. Y198 bears the Phosphotyrosine mark.

Belongs to the chordopoxvirinae A17 family. Interacts (via N-terminus) with D13 scaffold; this interaction helps D13 to associate with membranes. Interacts with A14. Interacts with A27; this interaction allows A27 to be anchored in the mature virion (MV) membrane. Part of a complex composed of A17, A25, A26 and A27. Post-translationally, the 22 kDa precursor is probably cleaved by the I7 protease during virus maturation. In terms of processing, phosphorylated on tyrosine and threonine. Its phosphorylation state is regulated by the F10 kinase and the H1 phosphatase. Phosphorylation by F10 kinase seems to be required to form the membranes associated with IV.

Its subcellular location is the virion membrane. Functionally, envelope protein which participates in virus morphogenesis. Needed for an early step in viral crescent membrane formation by interacting with D13 scaffold protein. Its interaction with D13 scaffold protein leads to the formation of rigid, crescent-shaped membranes that assemble around the cytoplasmic virus factory. Membrane anchor for the protein A27. A17-A27 virus envelope protein might be involved in fusion or attachment, and can further associate to A26. The protein is Virion membrane protein A17 precursor homolog of Fowlpox virus (strain NVSL) (FPV).